Consider the following 153-residue polypeptide: Prefoldin subunit alpha (153 aa).

The tract at residues 126-153 (KRLEQGYRQAPGGSPVPHRHDHEDHDEE) is disordered. Over residues 143-153 (HRHDHEDHDEE) the composition is skewed to basic and acidic residues.

It belongs to the prefoldin alpha subunit family. In terms of assembly, heterohexamer of two alpha and four beta subunits.

It localises to the cytoplasm. Functionally, molecular chaperone capable of stabilizing a range of proteins. Seems to fulfill an ATP-independent, HSP70-like function in archaeal de novo protein folding. The chain is Prefoldin subunit alpha from Methanoregula boonei (strain DSM 21154 / JCM 14090 / 6A8).